A 657-amino-acid polypeptide reads, in one-letter code: MNEYYEPTLLFRQNAVKKYSPELSPVSSMSSLDLPKSNNSSSSWLLDNHNPKDTEILNKSCSLNRLNIKSNYWKIPDNDMSLTSMALSRQGDSNKSLLGISSANDDSNLFIYELDLAENYLTHNNTISLPNVHAMRWVPQMGNNELSLITGNSKGYAHLVSIPNSNEEGQSAEIVKRFNHRKHLKSINKDPSIASHTSTDITKLNFMDKSMDLLSLYDNNLFLWDINGCDSQVRPKPISISSIPGIVNFDPIPHSSNSVGICGQFGVSLFDTRQPKFSVPSSVMKQANKRKLGANVIRWSPNDDNVFAASHMDGVIRLWDIRKQDYFASLDGHQGKKIISIEWNKNDLFSGGRDGNIVHWDLTSDINEYPKPDITNCGLKEGLNSIKFNPVKNSVEKTINQRQCGTVLPASNTNIVDMCSVSLTSHNEEDVKVLSIDSSSFLGLHSKIFDAVKVNINSEKTYYTDDDISLLLAAQQSSLSTLVNDSTENVTKPLTISRMPTTKITHDVAPPAIPTPASVVPTTPNMSNDTLAEGPDEFVEVGDIIRLKEPKFSFSNYNDSVFSVDSNHDIKSSPSSTTSRGSFGESSSSISTNPTIVEASPISHKRDPSDIFNFKTDFDFGLGLNDYKFDESLVDRSFDRMLSLKTNATNYYSVYSS.

WD repeat units follow at residues 77-122 (DNDM…NYLT), 127-170 (ISLP…EEGQ), 196-234 (HTST…SQVR), 287-329 (ANKR…YFAS), and 332-370 (GHQG…NEYP). The disordered stretch occupies residues 565–602 (DSNHDIKSSPSSTTSRGSFGESSSSISTNPTIVEASPI). Positions 572–592 (SSPSSTTSRGSFGESSSSIST) are enriched in low complexity.

Belongs to the WD repeat DSE1 family.

Involved in cell wall metabolism and required for the separation of the mother and daughter cells. This chain is Protein DSE1 (DSE1), found in Debaryomyces hansenii (strain ATCC 36239 / CBS 767 / BCRC 21394 / JCM 1990 / NBRC 0083 / IGC 2968) (Yeast).